A 220-amino-acid polypeptide reads, in one-letter code: Adenylate kinase (220 aa).

10-15 (GSGKST) is an ATP binding site. Residues 30–59 (SSGDLIRKEIAEGTPLGREMQAYLARGDLI) are NMP. AMP-binding positions include Ser-31, Arg-36, 57–59 (DLI), 83–86 (GYPR), and Gln-90. An LID region spans residues 124-161 (GRRICPKCGAVYHVEFNPPKIPGRCDVCGAELVQREDD). Arg-125 serves as a coordination point for ATP. Zn(2+) is bound by residues Cys-128 and Cys-131. Position 134–135 (134–135 (VY)) interacts with ATP. Zn(2+) contacts are provided by Cys-148 and Cys-151. AMP is bound by residues Arg-158 and Arg-169. Position 197 (Gly-197) interacts with ATP.

It belongs to the adenylate kinase family. In terms of assembly, monomer.

It is found in the cytoplasm. The enzyme catalyses AMP + ATP = 2 ADP. Its pathway is purine metabolism; AMP biosynthesis via salvage pathway; AMP from ADP: step 1/1. Catalyzes the reversible transfer of the terminal phosphate group between ATP and AMP. Plays an important role in cellular energy homeostasis and in adenine nucleotide metabolism. This is Adenylate kinase from Pyrococcus furiosus (strain ATCC 43587 / DSM 3638 / JCM 8422 / Vc1).